Here is a 464-residue protein sequence, read N- to C-terminus: mRNA capping enzyme LEF-4 (464 aa).

Residues 1–204 form an mRNA triphosphatase region; that stretch reads MDYGDFVIEK…NVMCNIIADM (204 aa). The segment at 205-464 is mRNA guanylyltransferase; the sequence is EALTDAQNIS…KHRRDRIVPN (260 aa). The active-site N6-GMP-lysine intermediate is K255.

This sequence belongs to the baculoviridae LEF-4 family. Interacts with LEF-8, LEF-9, and p47.

The protein localises to the host cytoplasm. It is found in the host nucleus. The enzyme catalyses a 5'-end diphospho-ribonucleoside in mRNA + GTP + H(+) = a 5'-end (5'-triphosphoguanosine)-ribonucleoside in mRNA + diphosphate. It carries out the reaction a 5'-end triphospho-ribonucleoside in mRNA + H2O = a 5'-end diphospho-ribonucleoside in mRNA + phosphate + H(+). Component of the viral DNA-dependent RNA polymerase that catalyzes two reactions involved in viral RNA cap formation: an RNA 5'-triphosphatase that hydrolyzes the gamma phosphate of triphosphate-terminated RNA and a guanylyltransferase that reacts with GTP to form a covalent protein-guanylate adduct. Therefore plays an essential role in late and very late gene expression. This is mRNA capping enzyme LEF-4 (LEF-4) from Autographa californica nuclear polyhedrosis virus (AcMNPV).